A 73-amino-acid polypeptide reads, in one-letter code: QGRMYQRFLRQHVDPDETGGNDHYLNLSRRNIQCPNRHEGVRFNTDIHEDLTNRRPIDEHEGVVRVTDKTEEG.

Q1 is modified (pyrrolidone carboxylic acid).

This sequence belongs to the pancreatic ribonuclease family. As to expression, milk.

The protein localises to the secreted. Its function is as follows. Secretory RNase specific towards pyrimidine bases, with higher activity towards poly C than poly U. Inhibits cell-free translation. The sequence is that of Lactogenin from Bos taurus (Bovine).